The chain runs to 280 residues: 3-methyl-2-oxobutanoate hydroxymethyltransferase (280 aa).

2 residues coordinate Mg(2+): aspartate 49 and aspartate 88. 3-methyl-2-oxobutanoate is bound by residues aspartate 49–serine 50, aspartate 88, and lysine 118. Position 120 (glutamate 120) interacts with Mg(2+). Glutamate 186 acts as the Proton acceptor in catalysis.

It belongs to the PanB family. Homodecamer; pentamer of dimers. Mg(2+) is required as a cofactor.

The protein localises to the cytoplasm. The enzyme catalyses 3-methyl-2-oxobutanoate + (6R)-5,10-methylene-5,6,7,8-tetrahydrofolate + H2O = 2-dehydropantoate + (6S)-5,6,7,8-tetrahydrofolate. Its pathway is cofactor biosynthesis; (R)-pantothenate biosynthesis; (R)-pantoate from 3-methyl-2-oxobutanoate: step 1/2. In terms of biological role, catalyzes the reversible reaction in which hydroxymethyl group from 5,10-methylenetetrahydrofolate is transferred onto alpha-ketoisovalerate to form ketopantoate. This Ruegeria sp. (strain TM1040) (Silicibacter sp.) protein is 3-methyl-2-oxobutanoate hydroxymethyltransferase.